Reading from the N-terminus, the 477-residue chain is Aspartyl/glutamyl-tRNA(Asn/Gln) amidotransferase subunit B (477 aa).

Belongs to the GatB/GatE family. GatB subfamily. In terms of assembly, heterotrimer of A, B and C subunits.

The catalysed reaction is L-glutamyl-tRNA(Gln) + L-glutamine + ATP + H2O = L-glutaminyl-tRNA(Gln) + L-glutamate + ADP + phosphate + H(+). It carries out the reaction L-aspartyl-tRNA(Asn) + L-glutamine + ATP + H2O = L-asparaginyl-tRNA(Asn) + L-glutamate + ADP + phosphate + 2 H(+). Its function is as follows. Allows the formation of correctly charged Asn-tRNA(Asn) or Gln-tRNA(Gln) through the transamidation of misacylated Asp-tRNA(Asn) or Glu-tRNA(Gln) in organisms which lack either or both of asparaginyl-tRNA or glutaminyl-tRNA synthetases. The reaction takes place in the presence of glutamine and ATP through an activated phospho-Asp-tRNA(Asn) or phospho-Glu-tRNA(Gln). In Ureaplasma urealyticum serovar 10 (strain ATCC 33699 / Western), this protein is Aspartyl/glutamyl-tRNA(Asn/Gln) amidotransferase subunit B.